Consider the following 84-residue polypeptide: Large ribosomal subunit protein bL27 (84 aa).

It belongs to the bacterial ribosomal protein bL27 family.

The sequence is that of Large ribosomal subunit protein bL27 from Buchnera aphidicola subsp. Schizaphis graminum (strain Sg).